We begin with the raw amino-acid sequence, 437 residues long: Branched-chain amino acid transport system 2 carrier protein (437 aa).

The next 12 membrane-spanning stretches (helical) occupy residues 9–29 (LLAL…IIFP), 43–63 (AAFG…VALA), 80–100 (AGVA…ATPR), 117–137 (GGVP…FLVL), 149–169 (VITP…IFAP), 192–212 (GYLT…ATAI), 228–248 (MIAG…LFYL), 280–300 (LLLA…LITA), 308–328 (LLPV…LLVA), 335–355 (LISL…VLIA), 369–389 (VFVP…LGAA), and 404–424 (LADQ…LAVV).

Belongs to the branched chain amino acid transporter family.

The protein resides in the cell inner membrane. In terms of biological role, component of the LIV-II transport system for branched-chain amino acids. BraB is specific for isoleucine, leucine and valine. The LIV-II transport system is coupled to sodium and lithium ions. This is Branched-chain amino acid transport system 2 carrier protein (braB) from Pseudomonas aeruginosa (strain ATCC 15692 / DSM 22644 / CIP 104116 / JCM 14847 / LMG 12228 / 1C / PRS 101 / PAO1).